Consider the following 133-residue polypeptide: Large ribosomal subunit protein uL22c (133 aa).

This sequence belongs to the universal ribosomal protein uL22 family. In terms of assembly, part of the 50S ribosomal subunit.

It is found in the plastid. The protein localises to the chloroplast. Its function is as follows. This protein binds specifically to 23S rRNA. Functionally, the globular domain of the protein is located near the polypeptide exit tunnel on the outside of the subunit, while an extended beta-hairpin is found that lines the wall of the exit tunnel in the center of the 70S ribosome. This is Large ribosomal subunit protein uL22c (rpl22) from Manihot esculenta (Cassava).